Reading from the N-terminus, the 194-residue chain is MRYPESLLKLTRALSRLPGIGPKTAQRLALHLAFHKEEAEALAEALEGIKRVRACRECGNLAEGELCPICQDEDRDRSLLAVVESVADLYALERSGEFRGLYHVLGGALNPLEGIGPKELNLEGLFRRLEGVEEVVLATSMTVEGEATALYLAEELKKRGVRVTRPAYGLPVGGSLEYADEVTLGRALEGRRPV.

The segment at C55–C70 adopts a C4-type zinc-finger fold. The Toprim domain occupies S78–P171.

Belongs to the RecR family.

In terms of biological role, may play a role in DNA repair. It seems to be involved in an RecBC-independent recombinational process of DNA repair. It may act with RecF and RecO. The chain is Recombination protein RecR from Thermus thermophilus (strain ATCC 27634 / DSM 579 / HB8).